A 387-amino-acid polypeptide reads, in one-letter code: Apoptosis-inducing factor homolog B (387 aa).

FAD contacts are provided by residues 12–16 (GGGYG), arginine 47, and aspartate 292.

The protein belongs to the FAD-dependent oxidoreductase family. FAD is required as a cofactor.

Its function is as follows. Putative FAD-dependent oxidoreductase. The polypeptide is Apoptosis-inducing factor homolog B (aifB) (Dictyostelium discoideum (Social amoeba)).